Reading from the N-terminus, the 445-residue chain is Chromosomal replication initiator protein DnaA (445 aa).

The interval 1–69 is domain I, interacts with DnaA modulators; it reads MEKIWLEAQS…IEAISSLTNI (69 aa). A domain II region spans residues 69–108; the sequence is IKYQVDFKITEKSQVEKKKVDLQATEKIENDSTRNVDFNT. The segment at 109–325 is domain III, AAA+ region; that stretch reads NLNPKYTFDS…GMLIRLGAYA (217 aa). 4 residues coordinate ATP: glycine 153, glycine 155, lysine 156, and threonine 157. A domain IV, binds dsDNA region spans residues 326 to 445; that stretch reads SLTGSEISLN…VEKMKKELMS (120 aa).

It belongs to the DnaA family. In terms of assembly, oligomerizes as a right-handed, spiral filament on DNA at oriC.

The protein resides in the cytoplasm. Plays an essential role in the initiation and regulation of chromosomal replication. ATP-DnaA binds to the origin of replication (oriC) to initiate formation of the DNA replication initiation complex once per cell cycle. Binds the DnaA box (a 9 base pair repeat at the origin) and separates the double-stranded (ds)DNA. Forms a right-handed helical filament on oriC DNA; dsDNA binds to the exterior of the filament while single-stranded (ss)DNA is stabiized in the filament's interior. The ATP-DnaA-oriC complex binds and stabilizes one strand of the AT-rich DNA unwinding element (DUE), permitting loading of DNA polymerase. After initiation quickly degrades to an ADP-DnaA complex that is not apt for DNA replication. Binds acidic phospholipids. In Geotalea daltonii (strain DSM 22248 / JCM 15807 / FRC-32) (Geobacter daltonii), this protein is Chromosomal replication initiator protein DnaA.